The primary structure comprises 271 residues: Tryptophan synthase alpha chain (271 aa).

Catalysis depends on proton acceptor residues Glu56 and Asp67.

This sequence belongs to the TrpA family. Tetramer of two alpha and two beta chains.

It catalyses the reaction (1S,2R)-1-C-(indol-3-yl)glycerol 3-phosphate + L-serine = D-glyceraldehyde 3-phosphate + L-tryptophan + H2O. It participates in amino-acid biosynthesis; L-tryptophan biosynthesis; L-tryptophan from chorismate: step 5/5. Its function is as follows. The alpha subunit is responsible for the aldol cleavage of indoleglycerol phosphate to indole and glyceraldehyde 3-phosphate. The polypeptide is Tryptophan synthase alpha chain (Mycolicibacterium paratuberculosis (strain ATCC BAA-968 / K-10) (Mycobacterium paratuberculosis)).